Reading from the N-terminus, the 128-residue chain is Fruiting body differentiation protein 16 (128 aa).

The signal sequence occupies residues Met-1–Ala-19.

Its function is as follows. Plays a role in the regulation of fruiting body development. The chain is Fruiting body differentiation protein 16 from Flammulina velutipes (Agaricus velutipes).